We begin with the raw amino-acid sequence, 349 residues long: RxLR effector protein CRE15 (349 aa).

Positions 1–33 (MITFKRLSSARWGALLTSIAVLFFLAITKGADA) are cleaved as a signal peptide. Residues 46-62 (RRLRTTTADAYYASEDR) carry the RxLR-dEER motif.

It belongs to the RxLR effector family. In terms of assembly, interacts directly with the potato ortholog of vascular highway 1 (VH1)-interacting kinase (VIK), encoding a predicted MEK kinase (MAP3K).

The protein resides in the secreted. The protein localises to the host cell membrane. Effector that promotes P.infestans virulence in Nicotiana benthamiana and potato. Attenuates cell death triggered by the pathogen-associated molecular pattern infestin 1 (INF1), indicating that the effector suppresses pattern-triggered immunity. However, it does not attenuate cell death triggered by a range of resistance proteins, suggesting that it specifically suppresses INF1-triggered cell death (ICD). Targets host MAP3K VIK in order to utilize or promote its ability to negatively regulate immunity. This chain is RxLR effector protein CRE15, found in Phytophthora infestans (strain T30-4) (Potato late blight agent).